We begin with the raw amino-acid sequence, 66 residues long: Cytoplasmic envelopment protein 3 (66 aa).

G2 carries the N-myristoyl glycine; by host lipid modification.

It belongs to the herpesviridae cytoplasmic envelopment protein 3 family. Interacts with cytoplasmic envelopment protein 2; this interaction is essential for the proper localization of each protein to the assembly complex and thus for the production of infectious virus. Phosphorylated. Phosphorylation does not seem to be required for recycling to the host Golgi apparatus. Packaging is selective for underphosphorylated forms.

It localises to the virion tegument. The protein resides in the virion membrane. The protein localises to the host cell membrane. Its subcellular location is the host Golgi apparatus membrane. Its function is as follows. Plays an important role in the cytoplasmic envelopment of tegument proteins and capsids during the assembly and egress processes. Also participates in viral entry at the fusion step probably by regulating the core fusion machinery. In Saimiriine herpesvirus 2 (strain 11) (SaHV-2), this protein is Cytoplasmic envelopment protein 3 (38).